A 521-amino-acid chain; its full sequence is Aspartic proteinase yapsin-1 (521 aa).

The signal sequence occupies residues 1 to 17 (MRIWILIFFSFIKLVSS). The Extracellular segment spans residues 18 to 500 (LQYTGNGVLA…NAVANAGNSF (483 aa)). One can recognise a Peptidase A1 domain in the interval 67 to 409 (YTTTLSIGRP…HQSQKMIAIG (343 aa)). The active site involves D85. N136, N157, N250, N289, N295, N354, N414, N418, N460, and N484 each carry an N-linked (GlcNAc...) asparagine glycan. A helical transmembrane segment spans residues 501-521 (SPLSAMVIMMMSAVFLGLGII).

It belongs to the peptidase A1 family.

It localises to the endoplasmic reticulum membrane. It is found in the secreted. Its subcellular location is the cell wall. Its function is as follows. Cleaves at paired basic residues. This Schizosaccharomyces pombe (strain 972 / ATCC 24843) (Fission yeast) protein is Aspartic proteinase yapsin-1 (yps1).